Here is a 250-residue protein sequence, read N- to C-terminus: Cobalt transport protein CbiM (250 aa).

An N-terminal signal peptide occupies residues M1–A27. 6 consecutive transmembrane segments (helical) span residues G33–V53, L70–V90, L102–F122, T134–F154, V168–A188, and I208–W228.

Belongs to the CbiM family. Forms an energy-coupling factor (ECF) transporter complex composed of an ATP-binding protein (A component, CbiO), a transmembrane protein (T component, CbiQ) and 2 possible substrate-capture proteins (S components, CbiM and CbiN) of unknown stoichimetry.

Its subcellular location is the cell membrane. The protein operates within cofactor biosynthesis; adenosylcobalamin biosynthesis. Part of the energy-coupling factor (ECF) transporter complex CbiMNOQ involved in cobalt import. In Anoxybacillus flavithermus (strain DSM 21510 / WK1), this protein is Cobalt transport protein CbiM.